The chain runs to 206 residues: uncharacterized protein (206 aa).

The 141-residue stretch at tyrosine 29–valine 169 folds into the Nudix hydrolase domain. The Nudix box motif lies at alanine 69–glycine 90. Mg(2+) is bound by residues glutamate 84 and glutamate 88.

The protein belongs to the Nudix hydrolase family. The cofactor is Mg(2+).

This is an uncharacterized protein from Clostridium acetobutylicum (strain ATCC 824 / DSM 792 / JCM 1419 / IAM 19013 / LMG 5710 / NBRC 13948 / NRRL B-527 / VKM B-1787 / 2291 / W).